We begin with the raw amino-acid sequence, 566 residues long: Beta,beta-carotene 15,15'-dioxygenase (566 aa).

Residues histidine 172, histidine 237, histidine 308, and histidine 514 each contribute to the Fe cation site. Residues 529–566 (TPAKTQEDENSDHPTGLTAPGLGHGENDFTAGHGGKSL) form a disordered region.

This sequence belongs to the carotenoid oxygenase family. Requires Fe(2+) as cofactor.

The protein localises to the cytoplasm. Its subcellular location is the cytosol. The enzyme catalyses all-trans-beta-carotene + O2 = 2 all-trans-retinal. It functions in the pathway cofactor metabolism; retinol metabolism. Its function is as follows. Symmetrically cleaves beta-carotene into two molecules of retinal using a dioxygenase mechanism. The protein is Beta,beta-carotene 15,15'-dioxygenase of Rattus norvegicus (Rat).